The following is a 99-amino-acid chain: NADH-quinone oxidoreductase subunit K (99 aa).

The next 3 membrane-spanning stretches (helical) occupy residues 3-23 (PANYLILSALLFTIGTVGVLV), 28-48 (IVVFMSIELMLNAVNLTLVTF), and 59-79 (VMAFFVMVVAAAEVVIGLAII).

Belongs to the complex I subunit 4L family. In terms of assembly, NDH-1 is composed of 14 different subunits. Subunits NuoA, H, J, K, L, M, N constitute the membrane sector of the complex.

It is found in the cell membrane. The catalysed reaction is a quinone + NADH + 5 H(+)(in) = a quinol + NAD(+) + 4 H(+)(out). In terms of biological role, NDH-1 shuttles electrons from NADH, via FMN and iron-sulfur (Fe-S) centers, to quinones in the respiratory chain. The immediate electron acceptor for the enzyme in this species is believed to be a menaquinone. Couples the redox reaction to proton translocation (for every two electrons transferred, four hydrogen ions are translocated across the cytoplasmic membrane), and thus conserves the redox energy in a proton gradient. This Frankia alni (strain DSM 45986 / CECT 9034 / ACN14a) protein is NADH-quinone oxidoreductase subunit K.